A 291-amino-acid polypeptide reads, in one-letter code: ATP synthase gamma chain (291 aa).

It belongs to the ATPase gamma chain family. F-type ATPases have 2 components, CF(1) - the catalytic core - and CF(0) - the membrane proton channel. CF(1) has five subunits: alpha(3), beta(3), gamma(1), delta(1), epsilon(1). CF(0) has three main subunits: a, b and c.

The protein resides in the cell inner membrane. Functionally, produces ATP from ADP in the presence of a proton gradient across the membrane. The gamma chain is believed to be important in regulating ATPase activity and the flow of protons through the CF(0) complex. This chain is ATP synthase gamma chain, found in Nitratidesulfovibrio vulgaris (strain ATCC 29579 / DSM 644 / CCUG 34227 / NCIMB 8303 / VKM B-1760 / Hildenborough) (Desulfovibrio vulgaris).